A 145-amino-acid chain; its full sequence is MYPAHLLVLLAVCVSLLGASAILPLPLNLVQFTYLIQCANKGSRASYHYADYGCYCGAGGSGTPVDELDRCCKIHDDCYGEAEKMGCYPKLTMYNYYCGTEGPYCSTKTDCQRYVCACDLQAAKCFARSPYNNKNYNIDTSKRCK.

The N-terminal stretch at 1–21 is a signal peptide; that stretch reads MYPAHLLVLLAVCVSLLGASA. Residues 22–27 constitute a propeptide that is removed on maturation; it reads ILPLPL. Disulfide bonds link Cys-38-Cys-98, Cys-54-Cys-144, Cys-56-Cys-72, Cys-71-Cys-125, Cys-78-Cys-118, Cys-87-Cys-111, and Cys-105-Cys-116. Residues Tyr-55, Gly-57, and Gly-59 each contribute to the Ca(2+) site. The active site involves His-75. Residue Asp-76 participates in Ca(2+) binding. Residue Asp-119 is part of the active site.

The protein belongs to the phospholipase A2 family. Group I subfamily. D49 sub-subfamily. The cofactor is Ca(2+). Expressed by the venom gland.

Its subcellular location is the secreted. The catalysed reaction is a 1,2-diacyl-sn-glycero-3-phosphocholine + H2O = a 1-acyl-sn-glycero-3-phosphocholine + a fatty acid + H(+). Its function is as follows. PLA2 catalyzes the calcium-dependent hydrolysis of the 2-acyl groups in 3-sn-phosphoglycerides. This chain is Basic phospholipase A2 cL037, found in Laticauda semifasciata (Black-banded sea krait).